A 1501-amino-acid polypeptide reads, in one-letter code: Neither inactivation nor afterpotential protein C (1501 aa).

The 267-residue stretch at 16-282 folds into the Protein kinase domain; that stretch reads FEIYEEIAQG…MVEMVEHPFL (267 aa). ATP contacts are provided by residues 22 to 30 and K45; that span reads IAQGVNAKV. The active-site Proton acceptor is D145. Phosphoserine is present on S183. Positions 332–1037 constitute a Myosin motor domain; the sequence is MYPEDLAALE…FLARLYELQV (706 aa). The tract at residues 913–934 is actin-binding; that stretch reads LTLLKMLSQNANLGVHFVRCIR. IQ domains follow at residues 1036–1065 and 1072–1101; these read QVKKVIKVQSMMRALLARKRVKGGKVFKLG and HDVAASKIQKAFRGFRDRVRLPPLVNEKSG. Residues 1043–1271 form an interaction with rtp region; it reads VQSMMRALLA…RMGESDNIYN (229 aa). Residues 1066–1501 form a non alpha-helical, C-terminal domain region; sequence KKGPEHHDVA…ITLSGYAVDI (436 aa). Disordered regions lie at residues 1308–1364 and 1390–1473; these read NWGV…DPVR and KTNY…EDSN. Residues 1326–1335 show a composition bias toward pro residues; sequence APPPPPPPMP. The segment covering 1336–1358 has biased composition (low complexity); that stretch reads SSNYYRNNPNQQQRNYQQRSSYP. The segment covering 1405–1414 has biased composition (basic and acidic residues); it reads NNRRGSDSGD. A compositionally biased stretch (polar residues) spans 1449-1463; it reads FGQQQRAPTLRQSPA.

In the C-terminal section; belongs to the TRAFAC class myosin-kinesin ATPase superfamily. Myosin family. It in the N-terminal section; belongs to the protein kinase superfamily. Ser/Thr protein kinase family. In terms of assembly, interacts with rtp. Expressed in the phototransducing compartment of photoreceptor cells, the rhabdomeres (at protein level).

It is found in the cytoplasm. Its subcellular location is the cytoskeleton. The protein localises to the nucleus. The protein resides in the membrane. It localises to the cell projection. It is found in the rhabdomere membrane. The enzyme catalyses L-seryl-[protein] + ATP = O-phospho-L-seryl-[protein] + ADP + H(+). It catalyses the reaction L-threonyl-[protein] + ATP = O-phospho-L-threonyl-[protein] + ADP + H(+). Functionally, required for photoreceptor cell function. The ninaC proteins combines putative serine/threonine-protein kinase and myosin activities. Essential for the expression and stability of the rtp protein in the photoreceptors. The rtp/ninaC complex is required for stability of inad and inac and the normal termination of phototransduction in the retina. This chain is Neither inactivation nor afterpotential protein C (ninaC), found in Drosophila melanogaster (Fruit fly).